The following is a 430-amino-acid chain: Serine hydroxymethyltransferase 1 (430 aa).

Residues L132 and 136–138 (GHL) each bind (6S)-5,6,7,8-tetrahydrofolate. An N6-(pyridoxal phosphate)lysine modification is found at K241.

Belongs to the SHMT family. In terms of assembly, homodimer. The cofactor is pyridoxal 5'-phosphate.

The protein resides in the cytoplasm. The catalysed reaction is (6R)-5,10-methylene-5,6,7,8-tetrahydrofolate + glycine + H2O = (6S)-5,6,7,8-tetrahydrofolate + L-serine. It functions in the pathway one-carbon metabolism; tetrahydrofolate interconversion. Its pathway is amino-acid biosynthesis; glycine biosynthesis; glycine from L-serine: step 1/1. In terms of biological role, catalyzes the reversible interconversion of serine and glycine with tetrahydrofolate (THF) serving as the one-carbon carrier. This reaction serves as the major source of one-carbon groups required for the biosynthesis of purines, thymidylate, methionine, and other important biomolecules. Also exhibits THF-independent aldolase activity toward beta-hydroxyamino acids, producing glycine and aldehydes, via a retro-aldol mechanism. The protein is Serine hydroxymethyltransferase 1 of Bordetella parapertussis (strain 12822 / ATCC BAA-587 / NCTC 13253).